A 165-amino-acid chain; its full sequence is MSAKGAGGARGRGAEGEKIVATNRRARFDFTIEDSWEAGLVLTGSEVKSLREGNVNLSDAYALPRGDELFLVNCRIGEYKQAAHFGHEPLRDRKLLMNRPELDRVKGKIEQRGYTLVPLRLYFKQGWAKVELGLAKGRSHEDRRHAIAERETKREMDREISRRRR.

The interval 141 to 165 (EDRRHAIAERETKREMDREISRRRR) is disordered.

The protein belongs to the SmpB family.

The protein resides in the cytoplasm. Required for rescue of stalled ribosomes mediated by trans-translation. Binds to transfer-messenger RNA (tmRNA), required for stable association of tmRNA with ribosomes. tmRNA and SmpB together mimic tRNA shape, replacing the anticodon stem-loop with SmpB. tmRNA is encoded by the ssrA gene; the 2 termini fold to resemble tRNA(Ala) and it encodes a 'tag peptide', a short internal open reading frame. During trans-translation Ala-aminoacylated tmRNA acts like a tRNA, entering the A-site of stalled ribosomes, displacing the stalled mRNA. The ribosome then switches to translate the ORF on the tmRNA; the nascent peptide is terminated with the 'tag peptide' encoded by the tmRNA and targeted for degradation. The ribosome is freed to recommence translation, which seems to be the essential function of trans-translation. This Anaeromyxobacter sp. (strain Fw109-5) protein is SsrA-binding protein.